A 139-amino-acid chain; its full sequence is MSSTATTKGGRGKPKASKSVSRSSKAGLQFPVGRIARFLKAGKYAERVGAGAPVYLSAVLEYLAAEVLELAGNAARDNKNNRIVPRHIQLAVRNDEELSKLLGSVTIANGGVLPNIHQTLLPKKVGKGKGEIGSASQEF.

Residues 1 to 24 (MSSTATTKGGRGKPKASKSVSRSS) are disordered. Ser136 is modified (phosphoserine; by ATM and ATR). The short motif at 136–137 (SQ) is the [ST]-Q motif element.

The protein belongs to the histone H2A family. The nucleosome is a histone octamer containing two molecules each of H2A, H2B, H3 and H4 assembled in one H3-H4 heterotetramer and two H2A-H2B heterodimers. The octamer wraps approximately 147 bp of DNA. Interacts with numerous proteins required for DNA damage signaling and repair when phosphorylated on Ser-136. Post-translationally, phosphorylated on Ser-136 (to form gamma-H2AX) in response to DNA double strand breaks (DSBs) generated by exogenous genotoxic agents and by stalled replication forks, and may also occur during meiotic recombination events. Phosphorylation can extend up to several thousand nucleosomes from the actual site of the DSB and may mark the surrounding chromatin for recruitment of proteins required for DNA damage signaling and repair. Widespread phosphorylation may also serve to amplify the damage signal or aid repair of persistent lesions. Phosphorylation of Ser-136 in response to ionizing radiation is mediated by ATM while defects in DNA replication induce Ser-136 phosphorylation subsequent to activation of ATR. Dephosphorylation of Ser-136 by PP2A is required for DNA DSB repair.

The protein localises to the nucleus. It localises to the chromosome. Its function is as follows. Variant histone H2A which replaces conventional H2A in a subset of nucleosomes. Nucleosomes wrap and compact DNA into chromatin, limiting DNA accessibility to the cellular machineries which require DNA as a template. Histones thereby play a central role in transcription regulation, DNA repair, DNA replication and chromosomal stability. DNA accessibility is regulated via a complex set of post-translational modifications of histones, also called histone code, and nucleosome remodeling. Required for checkpoint-mediated arrest of cell cycle progression in response to low doses of ionizing radiation and for efficient repair of DNA double strand breaks (DSBs) specifically when modified by C-terminal phosphorylation. The polypeptide is Histone H2AX (HIS2A) (Cicer arietinum (Chickpea)).